The chain runs to 291 residues: HTH-type transcriptional activator AmpR (291 aa).

Residues 6-63 (IPLNSLRAFEAAARHLSFTRAAIELNVTHSAISQHVKSLEQQLNCQLFVRGSRGLMLT) form the HTH lysR-type domain. Residues 23 to 42 (FTRAAIELNVTHSAISQHVK) constitute a DNA-binding region (H-T-H motif).

It belongs to the LysR transcriptional regulatory family.

The protein resides in the cytoplasm. In terms of biological role, regulates the expression of the beta-lactamase gene. Represses cephalosporinase (AmpC) in the presence of beta-lactams and induces it in the absence of them. The chain is HTH-type transcriptional activator AmpR (ampR) from Citrobacter freundii.